We begin with the raw amino-acid sequence, 82 residues long: Progonadoliberin-3 (82 aa).

The N-terminal stretch at 1–23 (MDLSNRTVVQVVVLALVAQVTLS) is a signal peptide. A Pyrrolidone carboxylic acid modification is found at Gln24. Gly33 carries the glycine amide modification.

The protein belongs to the GnRH family. In terms of tissue distribution, brain.

It localises to the secreted. In terms of biological role, stimulates the secretion of gonadotropins. This is Progonadoliberin-3 (gnrh3) from Oncorhynchus nerka (Sockeye salmon).